Consider the following 905-residue polypeptide: Protein translocase subunit SecA (905 aa).

ATP-binding positions include Gln87, 105-109, and Asp512; that span reads GEGKT. The tract at residues 836–905 is disordered; that stretch reads DVDAVDEQRK…KKYKHCHGKL (70 aa). A compositionally biased stretch (basic and acidic residues) spans 841–858; it reads DEQRKAADSAPREFRHEQ. Zn(2+) contacts are provided by Cys890, Cys892, Cys901, and His902. Positions 896–905 are enriched in basic residues; that stretch reads KKYKHCHGKL.

The protein belongs to the SecA family. In terms of assembly, monomer and homodimer. Part of the essential Sec protein translocation apparatus which comprises SecA, SecYEG and auxiliary proteins SecDF-YajC and YidC. The cofactor is Zn(2+).

Its subcellular location is the cell inner membrane. It is found in the cytoplasm. The enzyme catalyses ATP + H2O + cellular proteinSide 1 = ADP + phosphate + cellular proteinSide 2.. Its function is as follows. Part of the Sec protein translocase complex. Interacts with the SecYEG preprotein conducting channel. Has a central role in coupling the hydrolysis of ATP to the transfer of proteins into and across the cell membrane, serving both as a receptor for the preprotein-SecB complex and as an ATP-driven molecular motor driving the stepwise translocation of polypeptide chains across the membrane. The polypeptide is Protein translocase subunit SecA (Idiomarina loihiensis (strain ATCC BAA-735 / DSM 15497 / L2-TR)).